The chain runs to 802 residues: Pyrophosphate-energized membrane proton pump 3 (802 aa).

6 helical membrane passes run 41–61 (LNVR…FYMG), 66–86 (PIIV…VYLT), 118–138 (YGTI…IYLF), 160–180 (VAAF…GMWV), 206–226 (AGGF…AILY), and 246–266 (LPLL…FAQL). Lysine 273 provides a ligand contact to substrate. Residues aspartate 276, aspartate 280, and aspartate 306 each coordinate Mg(2+). The next 5 helical transmembrane spans lie at 348–368 (FILF…IGIL), 386–406 (MVVL…TFGA), 421–441 (WLNF…FVWI), 468–491 (IIAG…VAII), and 511–531 (GGLF…AYVL). Mg(2+) contacts are provided by aspartate 541 and asparagine 568. Transmembrane regions (helical) follow at residues 577-597 (FAIG…MDEV), 615-635 (VFIG…WACA), 686-706 (GALA…LGYY), and 716-736 (VVAA…LFLN). Positions 743 and 773 each coordinate Mg(2+). Lysine 776 is a substrate binding site. The chain crosses the membrane as a helical span at residues 782–802 (SIHVLIKMLATITLVMAPIFL).

It belongs to the H(+)-translocating pyrophosphatase (TC 3.A.10) family. K(+)-insensitive subfamily. Monomer.

It localises to the golgi apparatus membrane. The enzyme catalyses diphosphate + H2O + H(+)(in) = 2 phosphate + 2 H(+)(out). The sequence is that of Pyrophosphate-energized membrane proton pump 3 (AVPL2) from Arabidopsis thaliana (Mouse-ear cress).